The chain runs to 418 residues: Putative F-box protein At1g20795 (418 aa).

Positions Met-1–Lys-46 constitute an F-box domain.

This is Putative F-box protein At1g20795 from Arabidopsis thaliana (Mouse-ear cress).